Consider the following 97-residue polypeptide: Unclassified hydrophobin F (97 aa).

The N-terminal stretch at Met-1–Ala-17 is a signal peptide. Disulfide bonds link Cys-24/Cys-75, Cys-39/Cys-67, Cys-40/Cys-58, and Cys-76/Cys-85.

It is found in the secreted. Its subcellular location is the cell wall. In terms of biological role, aerial growth, conidiation, and dispersal of filamentous fungi in the environment rely upon a capability of their secreting small amphipathic proteins called hydrophobins (HPBs) with low sequence identity. Class I can self-assemble into an outermost layer of rodlet bundles on aerial cell surfaces, conferring cellular hydrophobicity that supports fungal growth, development and dispersal; whereas Class II form highly ordered films at water-air interfaces through intermolecular interactions but contribute nothing to the rodlet structure. In P.expansum, hydrophobins contribute to germination, tolerance to cold stress and mycotoxins patulin and citrinin production. HfbC, HfbD, HfbE, and HfbF have functional redundancy in fungal surface hydrophobicity. The sequence is that of Unclassified hydrophobin F from Penicillium expansum (Blue mold rot fungus).